Reading from the N-terminus, the 76-residue chain is uncharacterized protein (76 aa).

This is an uncharacterized protein from Mycobacterium tuberculosis (strain ATCC 25618 / H37Rv).